A 201-amino-acid polypeptide reads, in one-letter code: Recombination protein RecR (201 aa).

The C4-type zinc finger occupies cysteine 57–cysteine 72. Residues threonine 81–proline 176 form the Toprim domain.

The protein belongs to the RecR family.

In terms of biological role, may play a role in DNA repair. It seems to be involved in an RecBC-independent recombinational process of DNA repair. It may act with RecF and RecO. The sequence is that of Recombination protein RecR from Colwellia psychrerythraea (strain 34H / ATCC BAA-681) (Vibrio psychroerythus).